Reading from the N-terminus, the 477-residue chain is Trigger factor (477 aa).

The region spanning 169–254 (EDRVTIDYLG…VKEVAKPNEL (86 aa)) is the PPIase FKBP-type domain. The disordered stretch occupies residues 435-477 (VSKEELTAEDEDAASEAKPAKKAAPKKKAAPKKKADEGKSEEA). The segment covering 454–466 (AKKAAPKKKAAPK) has biased composition (basic residues). Over residues 467–477 (KKADEGKSEEA) the composition is skewed to basic and acidic residues.

Belongs to the FKBP-type PPIase family. Tig subfamily.

It localises to the cytoplasm. The catalysed reaction is [protein]-peptidylproline (omega=180) = [protein]-peptidylproline (omega=0). Involved in protein export. Acts as a chaperone by maintaining the newly synthesized protein in an open conformation. Functions as a peptidyl-prolyl cis-trans isomerase. The protein is Trigger factor of Brucella anthropi (strain ATCC 49188 / DSM 6882 / CCUG 24695 / JCM 21032 / LMG 3331 / NBRC 15819 / NCTC 12168 / Alc 37) (Ochrobactrum anthropi).